A 401-amino-acid polypeptide reads, in one-letter code: Elongation factor Tu (401 aa).

In terms of domain architecture, tr-type G spans 10 to 211 (KPHLNIGTIG…AVDTYVPNPT (202 aa)). The interval 19–26 (GHVDHGKT) is G1. 19 to 26 (GHVDHGKT) lines the GTP pocket. Mg(2+) is bound at residue T26. The interval 62-66 (GITIA) is G2. The interval 83-86 (DCPG) is G3. GTP-binding positions include 83-87 (DCPGH) and 138-141 (NKAD). The interval 138–141 (NKAD) is G4. The interval 179–181 (SAL) is G5.

This sequence belongs to the TRAFAC class translation factor GTPase superfamily. Classic translation factor GTPase family. EF-Tu/EF-1A subfamily. As to quaternary structure, monomer.

The protein resides in the cytoplasm. The catalysed reaction is GTP + H2O = GDP + phosphate + H(+). Its function is as follows. GTP hydrolase that promotes the GTP-dependent binding of aminoacyl-tRNA to the A-site of ribosomes during protein biosynthesis. The polypeptide is Elongation factor Tu (Leptospira biflexa serovar Patoc (strain Patoc 1 / Ames)).